The primary structure comprises 78 residues: Large ribosomal subunit protein bL28 (78 aa).

Residues 1-23 form a disordered region; it reads MSRVCQVTGKRPITGNNVSHSKR.

It belongs to the bacterial ribosomal protein bL28 family.

The polypeptide is Large ribosomal subunit protein bL28 (Marinomonas sp. (strain MWYL1)).